The primary structure comprises 310 residues: Ribosomal RNA small subunit methyltransferase H (310 aa).

Residues 35-37 (GGH), D52, F79, D100, and Q107 each bind S-adenosyl-L-methionine.

It belongs to the methyltransferase superfamily. RsmH family.

Its subcellular location is the cytoplasm. It catalyses the reaction cytidine(1402) in 16S rRNA + S-adenosyl-L-methionine = N(4)-methylcytidine(1402) in 16S rRNA + S-adenosyl-L-homocysteine + H(+). Specifically methylates the N4 position of cytidine in position 1402 (C1402) of 16S rRNA. This chain is Ribosomal RNA small subunit methyltransferase H, found in Anaeromyxobacter sp. (strain Fw109-5).